Reading from the N-terminus, the 298-residue chain is Protoheme IX farnesyltransferase (298 aa).

The next 9 membrane-spanning stretches (helical) occupy residues 23-43, 47-67, 93-113, 115-135, 143-163, 169-189, 211-231, 236-256, and 278-298; these read LLLLFTMYTAYIVGGGLGKPY, LVVLTLGFITIAAVTALNMYF, VFIATVAATIVSVILAWRIIN, HFALAIVIGFLFDIVAYTYLL, IIAGAVAGGAPALGGWAAAAG, ALLFSLIVATWVPSHIWFLAT, IAVASGIGLGSLVMGYSIVGL, VIGTVSLIVGVIAAIAIFHLA, and MMLGLVFLVMMLEKVVSYIIS.

This sequence belongs to the UbiA prenyltransferase family. Protoheme IX farnesyltransferase subfamily.

Its subcellular location is the cell membrane. It carries out the reaction heme b + (2E,6E)-farnesyl diphosphate + H2O = Fe(II)-heme o + diphosphate. The protein operates within porphyrin-containing compound metabolism; heme O biosynthesis; heme O from protoheme: step 1/1. Functionally, converts heme B (protoheme IX) to heme O by substitution of the vinyl group on carbon 2 of heme B porphyrin ring with a hydroxyethyl farnesyl side group. The protein is Protoheme IX farnesyltransferase of Hyperthermus butylicus (strain DSM 5456 / JCM 9403 / PLM1-5).